Reading from the N-terminus, the 456-residue chain is Flagellum-specific ATP synthase (456 aa).

Ala-182–Ser-189 is a binding site for ATP.

This sequence belongs to the ATPase alpha/beta chains family.

The protein resides in the cytoplasm. The enzyme catalyses ATP + H2O + 4 H(+)(in) = ADP + phosphate + 5 H(+)(out). Functionally, probable catalytic subunit of a protein translocase for flagellum-specific export, or a proton translocase involved in local circuits at the flagellum. May be involved in a specialized protein export pathway that proceeds without signal peptide cleavage. The protein is Flagellum-specific ATP synthase (fliI) of Salmonella typhimurium (strain LT2 / SGSC1412 / ATCC 700720).